A 223-amino-acid polypeptide reads, in one-letter code: MSHRFDNLPDLFNLPLKPNFSCELDLQKQGFFHIAGVDEVGRGPLAGPVVTAAVILDKDHVPDGLNDSKKLSAQRRNELYCEILQSALAVSIASLCARTIDQSDIRKATLEAMRRCVTGLAIPAHYALIDGRDIPFQLPCPATALIKGDQHSVSIAAASIIAKVTRDRMMKCAGQIYKNYGLEKHVGYATLAHRIALDKYGPVVGLHRYSFAPLKGRFRDNMS.

An RNase H type-2 domain is found at 32–223; that stretch reads FHIAGVDEVG…LKGRFRDNMS (192 aa). 3 residues coordinate a divalent metal cation: Asp-38, Glu-39, and Asp-130.

This sequence belongs to the RNase HII family. Requires Mn(2+) as cofactor. Mg(2+) is required as a cofactor.

It localises to the cytoplasm. It carries out the reaction Endonucleolytic cleavage to 5'-phosphomonoester.. Endonuclease that specifically degrades the RNA of RNA-DNA hybrids. This is Ribonuclease HII from Bartonella quintana (strain Toulouse) (Rochalimaea quintana).